Here is a 440-residue protein sequence, read N- to C-terminus: Transposon Ty1-LR2 Gag polyprotein (440 aa).

Composition is skewed to polar residues over residues 1–23, 48–60, and 127–152; these read MESQ…SVTS, TKAN…TPAS, and QSQF…GNTF. Disordered stretches follow at residues 1-93, 126-174, and 352-440; these read MESQ…MMTQ, PQSQ…PPPM, and GSRN…PGTY. Low complexity predominate over residues 153 to 165; that stretch reads TDSSSADSDMTST. The interval 299–401 is RNA-binding; that stretch reads NNGIHINNKV…NSKSKTARAH (103 aa). The segment covering 402 to 418 has biased composition (low complexity); that stretch reads NVSTSNNSPSTDNDSIS. S416 is modified (phosphoserine). Polar residues predominate over residues 419–428; that stretch reads KSTTEPIQLN. Residues 429-440 are compositionally biased toward basic and acidic residues; the sequence is NKHDLHLRPGTY.

As to quaternary structure, homotrimer.

It localises to the cytoplasm. Its function is as follows. Capsid protein (CA) is the structural component of the virus-like particle (VLP), forming the shell that encapsulates the retrotransposons dimeric RNA genome. The particles are assembled from trimer-clustered units and there are holes in the capsid shells that allow for the diffusion of macromolecules. CA also has nucleocapsid-like chaperone activity, promoting primer tRNA(i)-Met annealing to the multipartite primer-binding site (PBS), dimerization of Ty1 RNA and initiation of reverse transcription. This Saccharomyces cerevisiae (strain ATCC 204508 / S288c) (Baker's yeast) protein is Transposon Ty1-LR2 Gag polyprotein (TY1A-LR2).